We begin with the raw amino-acid sequence, 117 residues long: MKLCAVIIASLLVCVAVASSSDNQKEFAQEKEMTREETQSLGEHEKDDEVTGSEERSCIEEWKTCENDCECCGMSTLCAASWVDGHQIKLCRNEGGKLKKVLHFIQKSVSKIKSCKK.

The first 20 residues, 1 to 20 (MKLCAVIIASLLVCVAVASS), serve as a signal peptide directing secretion. The segment at 20-55 (SSDNQKEFAQEKEMTREETQSLGEHEKDDEVTGSEE) is disordered. A propeptide spanning residues 21-56 (SDNQKEFAQEKEMTREETQSLGEHEKDDEVTGSEER) is cleaved from the precursor. Basic and acidic residues predominate over residues 23–55 (NQKEFAQEKEMTREETQSLGEHEKDDEVTGSEE). 4 cysteine pairs are disulfide-bonded: C58-C72, C65-C78, C69-C115, and C71-C91.

It belongs to the neurotoxin 03 (Tx2) family. 02 subfamily. HNTX-XV sub-subfamily. In terms of tissue distribution, expressed by the venom gland.

It is found in the secreted. Putative ion channel inhibitor. In Cyriopagopus hainanus (Chinese bird spider), this protein is Hainantoxin-XV.